The sequence spans 335 residues: Protein-arginine N-acetylglucosaminyltransferase SseK3 (335 aa).

Residues 51–53 (QWF) and tyrosine 75 each bind UDP-N-acetyl-alpha-D-glucosamine. N-beta-linked (GlcNAc) arginine; by autocatalysis glycans are attached at residues arginine 153 and arginine 184. 224-227 (YLDA) contacts UDP-N-acetyl-alpha-D-glucosamine. Positions 226–228 (DAD) match the DXD motif motif. Aspartate 228 lines the Mn(2+) pocket. The active-site Proton acceptor is glutamate 258. N-beta-linked (GlcNAc) arginine; by autocatalysis glycosylation is present at arginine 305. Aspartate 325 and serine 327 together coordinate Mn(2+). Residues serine 327 and 332 to 335 (SSWR) contribute to the UDP-N-acetyl-alpha-D-glucosamine site. The N-beta-linked (GlcNAc) arginine; by autocatalysis glycan is linked to arginine 335.

This sequence belongs to the glycosyltransferase NleB family. In terms of assembly, interacts with host TRIM32; without mediating its GlcNAcylation. Mn(2+) serves as cofactor. Auto-glycosylated: arginine GlcNAcylation is required for activity toward death domain-containing host target proteins.

It localises to the secreted. The protein localises to the host Golgi apparatus. It carries out the reaction L-arginyl-[protein] + UDP-N-acetyl-alpha-D-glucosamine = N(omega)-(N-acetyl-beta-D-glucosaminyl)-L-arginyl-[protein] + UDP + H(+). Protein-arginine N-acetylglucosaminyltransferase effector that disrupts TNF signaling in infected cells, including NF-kappa-B signaling and apoptosis. Acts by catalyzing the transfer of a single N-acetylglucosamine (GlcNAc) to a conserved arginine residue in the death domain of host proteins such as TRADD, TNFRSF1A/TNFR1 and TNFRSF10B/TRAILR2: arginine GlcNAcylation prevents homotypic/heterotypic death domain interactions and assembly of the oligomeric TNF-alpha receptor complex, thereby disrupting TNF signaling. Also acts on host proteins without a death domain: catalyzes arginine GlcNAcylation of host small Rab GTPase (Rab1, Rab5 and Rab11), thereby preventing GTPase activity and leading to impaired host vesicular protein transport. Also mediates auto-GlcNAcylation, which is required for activity toward death domain-containing host target proteins. The sequence is that of Protein-arginine N-acetylglucosaminyltransferase SseK3 from Salmonella typhimurium (strain SL1344).